A 197-amino-acid polypeptide reads, in one-letter code: MFEYPQGYKLIAGVDEVGRGPLVGAVVTAAVILDPHNPIEGLADSKKLSEKKRLALAEEIKEKARAWALGRAEADEIDEINILQASLLAMTRAVKSLKIQPHFVLIDGNKIPKDLAIPAQAVVKGDSLVAEISAASILAKVARDQEMEELDKQYPEYAFAQHKGYPTKLHLEKLAELGALPQHRRSFAPVKKALEQF.

The region spanning 9-197 (KLIAGVDEVG…APVKKALEQF (189 aa)) is the RNase H type-2 domain. A divalent metal cation contacts are provided by aspartate 15, glutamate 16, and aspartate 107.

This sequence belongs to the RNase HII family. Mn(2+) is required as a cofactor. It depends on Mg(2+) as a cofactor.

It localises to the cytoplasm. The catalysed reaction is Endonucleolytic cleavage to 5'-phosphomonoester.. Its function is as follows. Endonuclease that specifically degrades the RNA of RNA-DNA hybrids. This chain is Ribonuclease HII (rnhB), found in Haemophilus influenzae (strain ATCC 51907 / DSM 11121 / KW20 / Rd).